A 131-amino-acid polypeptide reads, in one-letter code: Histone H2A.2 (131 aa).

A disordered region spans residues M1 to A22. At S2 the chain carries N-acetylserine. Residues K5 and K7 each carry the N6-acetyllysine modification. The residue at position 105 (Q105) is an N5-methylglutamine. A Glycyl lysine isopeptide (Lys-Gly) (interchain with G-Cter in SUMO) cross-link involves residue K126. Position 128 is a phosphoserine (S128). A [ST]-Q motif motif is present at residues S128–Q129.

It belongs to the histone H2A family. The nucleosome is a histone octamer containing two molecules each of H2A, H2B, H3 and H4 assembled in one H3-H4 heterotetramer and two H2A-H2B heterodimers. The octamer wraps approximately 147 bp of DNA. Post-translationally, phosphorylated to form H2AS128ph (gamma-H2A) in response to DNA double-strand breaks (DSBs) generated by exogenous genotoxic agents and by stalled replication forks. Phosphorylation is dependent on the DNA damage checkpoint kinases MEC1/ATR and TEL1/ATM, spreads on either side of a detected DSB site and may mark the surrounding chromatin for recruitment of proteins required for DNA damage signaling and repair. Gamma-H2A is removed from the DNA prior to the strand invasion-primer extension step of the repair process and subsequently dephosphorylated. Dephosphorylation is necessary for efficient recovery from the DNA damage checkpoint. Acetylated by ESA1 to form H2AK4ac and H2AK7ac.

It is found in the nucleus. It localises to the chromosome. Its function is as follows. Core component of nucleosome which plays a central role in DNA double strand break (DSB) repair. Nucleosomes wrap and compact DNA into chromatin, limiting DNA accessibility to the cellular machineries which require DNA as a template. Histones thereby play a central role in transcription regulation, DNA repair, DNA replication and chromosomal stability. DNA accessibility is regulated via a complex set of post-translational modifications of histones, also called histone code, and nucleosome remodeling. This Scheffersomyces stipitis (strain ATCC 58785 / CBS 6054 / NBRC 10063 / NRRL Y-11545) (Yeast) protein is Histone H2A.2 (HTA2).